The primary structure comprises 59 residues: Small ribosomal subunit protein bS21 (59 aa).

The segment at 35 to 59 is disordered; the sequence is REHYEKPSVKKKKKSEAAKRKKRNF. Residues 43-59 show a composition bias toward basic residues; that stretch reads VKKKKKSEAAKRKKRNF.

This sequence belongs to the bacterial ribosomal protein bS21 family.

The protein is Small ribosomal subunit protein bS21 of Finegoldia magna (strain ATCC 29328 / DSM 20472 / WAL 2508) (Peptostreptococcus magnus).